The following is a 165-amino-acid chain: NADPH-dependent 7-cyano-7-deazaguanine reductase (165 aa).

Cysteine 56 acts as the Thioimide intermediate in catalysis. The active-site Proton donor is the aspartate 63. Substrate contacts are provided by residues 78 to 80 (VES) and 97 to 98 (HE).

It belongs to the GTP cyclohydrolase I family. QueF type 1 subfamily.

The protein localises to the cytoplasm. The enzyme catalyses 7-aminomethyl-7-carbaguanine + 2 NADP(+) = 7-cyano-7-deazaguanine + 2 NADPH + 3 H(+). Its pathway is tRNA modification; tRNA-queuosine biosynthesis. Its function is as follows. Catalyzes the NADPH-dependent reduction of 7-cyano-7-deazaguanine (preQ0) to 7-aminomethyl-7-deazaguanine (preQ1). This Bacillus cytotoxicus (strain DSM 22905 / CIP 110041 / 391-98 / NVH 391-98) protein is NADPH-dependent 7-cyano-7-deazaguanine reductase.